The primary structure comprises 650 residues: Threonine--tRNA ligase (650 aa).

The TGS domain maps to 3–65 (DLVKVTLPDG…DRDARLEIVT (63 aa)). Residues 248–548 (DHRRLGPQLG…LTEHYAGAFP (301 aa)) are catalytic. Zn(2+) is bound by residues C349, H400, and H525.

It belongs to the class-II aminoacyl-tRNA synthetase family. In terms of assembly, homodimer. Requires Zn(2+) as cofactor.

It is found in the cytoplasm. It carries out the reaction tRNA(Thr) + L-threonine + ATP = L-threonyl-tRNA(Thr) + AMP + diphosphate + H(+). Functionally, catalyzes the attachment of threonine to tRNA(Thr) in a two-step reaction: L-threonine is first activated by ATP to form Thr-AMP and then transferred to the acceptor end of tRNA(Thr). Also edits incorrectly charged L-seryl-tRNA(Thr). The protein is Threonine--tRNA ligase of Anaeromyxobacter dehalogenans (strain 2CP-C).